We begin with the raw amino-acid sequence, 426 residues long: UDP-N-acetylglucosamine 1-carboxyvinyltransferase (426 aa).

A phosphoenolpyruvate-binding site is contributed by 22–23 (KN). A UDP-N-acetyl-alpha-D-glucosamine-binding site is contributed by Arg94. The Proton donor role is filled by Cys118. 2-(S-cysteinyl)pyruvic acid O-phosphothioketal is present on Cys118. UDP-N-acetyl-alpha-D-glucosamine-binding positions include 123–127 (RPVDL), Asp310, and Ile332.

This sequence belongs to the EPSP synthase family. MurA subfamily.

Its subcellular location is the cytoplasm. The enzyme catalyses phosphoenolpyruvate + UDP-N-acetyl-alpha-D-glucosamine = UDP-N-acetyl-3-O-(1-carboxyvinyl)-alpha-D-glucosamine + phosphate. Its pathway is cell wall biogenesis; peptidoglycan biosynthesis. Cell wall formation. Adds enolpyruvyl to UDP-N-acetylglucosamine. The chain is UDP-N-acetylglucosamine 1-carboxyvinyltransferase from Hyphomonas neptunium (strain ATCC 15444).